The sequence spans 387 residues: F-box protein At5g41490 (387 aa).

The F-box domain maps to 2 to 47 (ATMITNLRRDLIEEIISRVPLRSMKAVRLTCKSWNNISKSEIFTKM).

The chain is F-box protein At5g41490 from Arabidopsis thaliana (Mouse-ear cress).